Here is a 250-residue protein sequence, read N- to C-terminus: NADH-quinone oxidoreductase subunit C (250 aa).

Positions 193–250 (GMTPPLPGDEKADMPPIDDPMVTEGPEDTGAGARANAKAAEGTPADPPAMDDEEEDDA) are disordered. Low complexity predominate over residues 222 to 236 (GAGARANAKAAEGTP). Acidic residues predominate over residues 241-250 (AMDDEEEDDA).

The protein belongs to the complex I 30 kDa subunit family. NDH-1 is composed of 14 different subunits. Subunits NuoB, C, D, E, F, and G constitute the peripheral sector of the complex.

It is found in the cell inner membrane. It carries out the reaction a quinone + NADH + 5 H(+)(in) = a quinol + NAD(+) + 4 H(+)(out). Functionally, NDH-1 shuttles electrons from NADH, via FMN and iron-sulfur (Fe-S) centers, to quinones in the respiratory chain. The immediate electron acceptor for the enzyme in this species is believed to be ubiquinone. Couples the redox reaction to proton translocation (for every two electrons transferred, four hydrogen ions are translocated across the cytoplasmic membrane), and thus conserves the redox energy in a proton gradient. The polypeptide is NADH-quinone oxidoreductase subunit C (Erythrobacter litoralis (strain HTCC2594)).